The chain runs to 302 residues: Bifunctional protein FolD (302 aa).

NADP(+)-binding positions include 165-167 (GRS), S190, and I231.

Belongs to the tetrahydrofolate dehydrogenase/cyclohydrolase family. As to quaternary structure, homodimer.

It carries out the reaction (6R)-5,10-methylene-5,6,7,8-tetrahydrofolate + NADP(+) = (6R)-5,10-methenyltetrahydrofolate + NADPH. It catalyses the reaction (6R)-5,10-methenyltetrahydrofolate + H2O = (6R)-10-formyltetrahydrofolate + H(+). Its pathway is one-carbon metabolism; tetrahydrofolate interconversion. In terms of biological role, catalyzes the oxidation of 5,10-methylenetetrahydrofolate to 5,10-methenyltetrahydrofolate and then the hydrolysis of 5,10-methenyltetrahydrofolate to 10-formyltetrahydrofolate. The sequence is that of Bifunctional protein FolD from Prochlorococcus marinus (strain MIT 9211).